Reading from the N-terminus, the 465-residue chain is GTPase Der (465 aa).

2 EngA-type G domains span residues 3–167 (PLVA…PEEG) and 179–352 (VRIA…ASAT). Residues 9-16 (GRPNVGKS), 57-61 (DTGGI), 119-122 (NKID), 185-192 (GRPNVGKS), 232-236 (DTAGL), and 297-300 (NKWD) contribute to the GTP site. Residues 353–437 (HEFSTSEVNQ…PVCFIFREGA (85 aa)) form the KH-like domain.

The protein belongs to the TRAFAC class TrmE-Era-EngA-EngB-Septin-like GTPase superfamily. EngA (Der) GTPase family. In terms of assembly, associates with the 50S ribosomal subunit.

Functionally, GTPase that plays an essential role in the late steps of ribosome biogenesis. This chain is GTPase Der, found in Xanthomonas oryzae pv. oryzae (strain MAFF 311018).